Consider the following 245-residue polypeptide: NLP effector protein Pc118551 (245 aa).

An N-terminal signal peptide occupies residues 1–19; it reads MNLRAFLLSAVAALVAVQA. The Hepta-peptide GHRHDWE motif motif lies at 121–127; sequence QRRHLWE. N-linked (GlcNAc...) asparagine glycosylation occurs at Asn-140.

Belongs to the Necrosis inducing protein (NPP1) family.

Its subcellular location is the secreted. Secreted effector that contributes strongly to virulence during infection by P.capsici. This is NLP effector protein Pc118551 from Phytophthora capsici.